Reading from the N-terminus, the 339-residue chain is Phenylalanine--tRNA ligase alpha subunit (339 aa).

Glu254 serves as a coordination point for Mg(2+).

Belongs to the class-II aminoacyl-tRNA synthetase family. Phe-tRNA synthetase alpha subunit type 1 subfamily. In terms of assembly, tetramer of two alpha and two beta subunits. It depends on Mg(2+) as a cofactor.

Its subcellular location is the cytoplasm. The enzyme catalyses tRNA(Phe) + L-phenylalanine + ATP = L-phenylalanyl-tRNA(Phe) + AMP + diphosphate + H(+). The sequence is that of Phenylalanine--tRNA ligase alpha subunit from Clostridium kluyveri (strain ATCC 8527 / DSM 555 / NBRC 12016 / NCIMB 10680 / K1).